The primary structure comprises 266 residues: NADP-dependent mannitol dehydrogenase (266 aa).

The NADP(+) site is built by S53, N107, and K140. Residue S159 is the Proton donor of the active site. NADP(+) contacts are provided by Y174, K178, I206, and T208. Catalysis depends on Y174, which acts as the Proton acceptor. K178 functions as the Lowers pKa of active site Tyr in the catalytic mechanism.

This sequence belongs to the short-chain dehydrogenases/reductases (SDR) family. Homotetramer.

The enzyme catalyses D-mannitol + NADP(+) = D-fructose + NADPH + H(+). Functionally, D-mannitol 2-dehydrogenase which is not necessary for D-mannitol catabolism. D-mannitol metabolism occurs via at least two different routes involving mannitol dehydrogenase (MDH) or mannitol 1-phosphate dehydrogenase, and the exact physiological role of mannitol dehydrogenases remains unclear. This Hypocrea jecorina (strain ATCC 56765 / BCRC 32924 / NRRL 11460 / Rut C-30) (Trichoderma reesei) protein is NADP-dependent mannitol dehydrogenase.